The chain runs to 106 residues: Thioredoxin (106 aa).

A Thioredoxin domain is found at 2–106 (VQVISNLDEF…LESLVQKSLA (105 aa)). Residues Cys-30 and Cys-33 each act as nucleophile in the active site. Cys-30 and Cys-33 are disulfide-bonded.

This sequence belongs to the thioredoxin family.

Functionally, participates in various redox reactions through the reversible oxidation of its active center dithiol to a disulfide and catalyzes dithiol-disulfide exchange reactions. The protein is Thioredoxin of Coprinus comatus (Shaggy mane).